A 249-amino-acid chain; its full sequence is MQWGHCGVKSASCSWMPSLSFLSVWLILSFSLPYCLGSPSQDGYWSFFSEWFAPRFSVRALPFTLPNYRRSYESLLPNCRPDVPQFAFKHPLGILWHMRVSHLIDEMVSRRIYQTMEHSGQAAWKYVVGEATLTKLSKLDIVTHFQHLAAVEADSCRFLSSRLVMLKNLAVGNVSLQYNTTLDRVELIFPTPGTRPKLTDFRQWLISVHASIFSSVASSVTLFIVLWLRIPALRYVFGFHWPTATHHSS.

The N-terminal stretch at 1–35 (MQWGHCGVKSASCSWMPSLSFLSVWLILSFSLPYC) is a signal peptide. The Virion surface portion of the chain corresponds to 36-207 (LGSPSQDGYW…LTDFRQWLIS (172 aa)). Asn173 and Asn179 each carry an N-linked (GlcNAc...) asparagine; by host glycan. The helical transmembrane segment at 208-228 (VHASIFSSVASSVTLFIVLWL) threads the bilayer. Residues 229 to 249 (RIPALRYVFGFHWPTATHHSS) lie on the Intravirion side of the membrane.

In terms of assembly, heterotrimer of GP2a, GP3, and GP4. The GP2a-GP3-GP4 complex associates with the E protein. Interacts with host CD163; this interaction plays a role in virus entry into host cell.

It localises to the virion membrane. The protein resides in the host endoplasmic reticulum membrane. The protein localises to the host Golgi apparatus membrane. It is found in the secreted. Its function is as follows. Minor envelope protein. Along with GP4, serves as the viral attachment protein responsible for mediating interactions with CD163 thereby playing a role in virus entry into susceptible host cells. This is Glycoprotein 2a (GP2a) from Porcine reproductive and respiratory syndrome virus (isolate Pig/United States/SD 01-08/2001) (PRRSV).